The primary structure comprises 80 residues: Large ribosomal subunit protein bL31B (80 aa).

This sequence belongs to the bacterial ribosomal protein bL31 family. Type B subfamily. Part of the 50S ribosomal subunit.

The chain is Large ribosomal subunit protein bL31B from Exiguobacterium sp. (strain ATCC BAA-1283 / AT1b).